The chain runs to 287 residues: Small ribosomal subunit biogenesis GTPase RsgA (287 aa).

The CP-type G domain maps to 61-218 (SSELIRPTVA…LVDTPGFTTL (158 aa)). GTP contacts are provided by residues 110–113 (NKED) and 161–169 (GPSGAGKST). Zn(2+) contacts are provided by Cys-242, Cys-247, His-249, and Cys-255.

The protein belongs to the TRAFAC class YlqF/YawG GTPase family. RsgA subfamily. In terms of assembly, monomer. Associates with 30S ribosomal subunit, binds 16S rRNA. The cofactor is Zn(2+).

The protein resides in the cytoplasm. Functionally, one of several proteins that assist in the late maturation steps of the functional core of the 30S ribosomal subunit. Helps release RbfA from mature subunits. May play a role in the assembly of ribosomal proteins into the subunit. Circularly permuted GTPase that catalyzes slow GTP hydrolysis, GTPase activity is stimulated by the 30S ribosomal subunit. This chain is Small ribosomal subunit biogenesis GTPase RsgA, found in Clostridium perfringens (strain 13 / Type A).